The primary structure comprises 682 residues: Potassium-transporting ATPase ATP-binding subunit (682 aa).

4 helical membrane-spanning segments follow: residues 34–54, 62–82, 219–239, and 254–274; these read PVMF…IAMA, ALFS…ANFA, IALT…TATL, and VLVA…LSAI. The 4-aspartylphosphate intermediate role is filled by D307. Residues D344, E348, 377–384, and K395 each bind ATP; that span reads FTAQSRMS. D518 and D522 together coordinate Mg(2+). 3 consecutive transmembrane segments (helical) span residues 588 to 608, 616 to 636, and 656 to 676; these read FAII…LNIM, AILS…PLAL, and IYGL…DLLL.

The protein belongs to the cation transport ATPase (P-type) (TC 3.A.3) family. Type IA subfamily. In terms of assembly, the system is composed of three essential subunits: KdpA, KdpB and KdpC.

It is found in the cell inner membrane. The catalysed reaction is K(+)(out) + ATP + H2O = K(+)(in) + ADP + phosphate + H(+). Functionally, part of the high-affinity ATP-driven potassium transport (or Kdp) system, which catalyzes the hydrolysis of ATP coupled with the electrogenic transport of potassium into the cytoplasm. This subunit is responsible for energy coupling to the transport system and for the release of the potassium ions to the cytoplasm. The protein is Potassium-transporting ATPase ATP-binding subunit of Shigella boydii serotype 4 (strain Sb227).